A 374-amino-acid polypeptide reads, in one-letter code: MSLPNQSLEGLPQEASNRSLNATGAWDPEVLQALRISLVVVLSIITLATVLSNAFVLTTILLTKKLHTPANYLIGSLATTDLLVSILVMPISIAYTTTRTWNFGQILCDIWVSSDITCCTASILHLCVIALDRYWAITDALEYSKRRTAGHAAAMIAAVWAISICISIPPLFWRQATAHEEMSDCLVNTSQISYTIYSTCGAFYIPSILLIILYGRIYVAARSRILNPPSLYGKRFTTAQLITGSAGSSLCSLNPSLHESHTHTVGSPLFFNQVKIKLADSILERKRISAARERKATKTLGIILGAFIICWLPFFVVSLVLPICRDSCWIHPALFDFFTWLGYLNSLINPVIYTVFNEDFRQAFQRVVHFRKAS.

Asn-5, Asn-17, and Asn-21 each carry an N-linked (GlcNAc...) asparagine glycan. 3 consecutive transmembrane segments (helical) span residues 36-61, 73-94, and 107-131; these read ISLV…TTIL, LIGS…ISIA, and LCDI…VIAL. A disulfide bridge connects residues Cys-108 and Cys-185. 2 residues coordinate serotonin: Asp-115 and Cys-119. Residues 132-134 carry the DRY motif; important for ligand-induced conformation changes motif; sequence DRY. 4 helical membrane passes run 152-173, 192-215, 298-323, and 333-356; these read AAAM…PLFW, ISYT…ILYG, KTLG…VLPI, and ALFD…YTVF. Serotonin is bound at residue Ser-318. The NPxxY motif; important for ligand-induced conformation changes and signaling signature appears at 349 to 353; it reads NPVIY.

This sequence belongs to the G-protein coupled receptor 1 family. In terms of assembly, homodimer. Heterodimer with HTR1B. As to expression, detected in dorsal raphe.

The protein resides in the cell membrane. Its function is as follows. G-protein coupled receptor for 5-hydroxytryptamine (serotonin). Also functions as a receptor for ergot alkaloid derivatives, various anxiolytic and antidepressant drugs and other psychoactive substances. Ligand binding causes a conformation change that triggers signaling via guanine nucleotide-binding proteins (G proteins) and modulates the activity of downstream effectors, such as adenylate cyclase. HTR1D is coupled to G(i)/G(o) G alpha proteins and mediates inhibitory neurotransmission by inhibiting adenylate cyclase activity. Regulates the release of 5-hydroxytryptamine in the brain, and thereby affects neural activity. May also play a role in regulating the release of other neurotransmitters. May play a role in vasoconstriction. This Rattus norvegicus (Rat) protein is 5-hydroxytryptamine receptor 1D (Htr1d).